A 161-amino-acid polypeptide reads, in one-letter code: Large ribosomal subunit protein uL15 (161 aa).

The disordered stretch occupies residues 1–39; sequence MTKLNELAPREGSTKGRMRVGRGPGSGKGKTAGRGVKGQ. Residues 22–36 are compositionally biased toward gly residues; it reads RGPGSGKGKTAGRGV.

Belongs to the universal ribosomal protein uL15 family. As to quaternary structure, part of the 50S ribosomal subunit.

Functionally, binds to the 23S rRNA. The protein is Large ribosomal subunit protein uL15 of Caulobacter vibrioides (strain ATCC 19089 / CIP 103742 / CB 15) (Caulobacter crescentus).